We begin with the raw amino-acid sequence, 32 residues long: uncharacterized protein (32 aa).

This is an uncharacterized protein from Treponema pallidum (strain Nichols).